Consider the following 448-residue polypeptide: Cyclic dof factor 3 (448 aa).

The tract at residues 26–108 (AVTVEDDEED…DGKTLKKPTK (83 aa)) is disordered. Residues 29-39 (VEDDEEDDWSG) show a composition bias toward acidic residues. The segment covering 40 to 54 (GDDKSPEKVTPELSD) has biased composition (basic and acidic residues). Residues 55 to 69 (KNNNNCNDNSFNNSK) are compositionally biased toward low complexity. Residues 80-99 (STDQIESSDTPEDNQQTTPD) show a composition bias toward polar residues. The Dof-type zinc finger occupies 110–164 (LPCPRCKSMETKFCYYNNYNINQPRHFCKACQRYWTAGGTMRNVPVGAGRRKNKS). Zn(2+) contacts are provided by C112, C115, C137, and C140. 2 disordered regions span residues 243-269 (NGDDCSSGSSVTTSNNHSVDESRAQSG) and 332-370 (SSSPISQKCSNTNSPTLGKHPRDEGSSKKDNETERKQKA). Polar residues-rich tracts occupy residues 246 to 259 (DCSSGSSVTTSNNH) and 332 to 347 (SSSPISQKCSNTNSPT). A compositionally biased stretch (basic and acidic residues) spans 351–368 (HPRDEGSSKKDNETERKQ).

Interacts with ADO2 (via kelch repeats) and ADO3 (via kelch repeats). As to expression, expressed in the vasculature of cotyledons and hypocotyls, leaves and roots.

It localises to the nucleus. Its function is as follows. Transcription factor that binds specifically to a 5'-AA[AG]G-3' consensus core sequence. Regulates a photoperiodic flowering response. Transcriptional repressor of 'CONSTANS' expression. This is Cyclic dof factor 3 (CDF3) from Arabidopsis thaliana (Mouse-ear cress).